Here is a 209-residue protein sequence, read N- to C-terminus: Small ribosomal subunit protein uS4 (209 aa).

Basic residues predominate over residues methionine 1–leucine 13. Disordered regions lie at residues methionine 1–proline 20 and tyrosine 28–aspartate 49. An S4 RNA-binding domain is found at glutamine 95–glycine 160.

Belongs to the universal ribosomal protein uS4 family. In terms of assembly, part of the 30S ribosomal subunit. Contacts protein S5. The interaction surface between S4 and S5 is involved in control of translational fidelity.

Functionally, one of the primary rRNA binding proteins, it binds directly to 16S rRNA where it nucleates assembly of the body of the 30S subunit. Its function is as follows. With S5 and S12 plays an important role in translational accuracy. This chain is Small ribosomal subunit protein uS4, found in Clavibacter sepedonicus (Clavibacter michiganensis subsp. sepedonicus).